Here is a 105-residue protein sequence, read N- to C-terminus: Guanidinium exporter (105 aa).

The helical transmembrane segment at 1 to 21 (MSWIILLIAGLLEVVWAVGLK) threads the bilayer. At 22 to 28 (YTHGFSR) the chain is on the cytoplasmic side. Residues 29–49 (LTPSIITITAMVISMALLSWA) traverse the membrane as a helical segment. Over 50–57 (MKTLPVGT) the chain is Periplasmic. The helical transmembrane segment at 58-78 (AYAIWTGIGAVGAAITGILLL) threads the bilayer. The Cytoplasmic segment spans residues 79-81 (GES). A helical membrane pass occupies residues 82 to 102 (ASPARLLSLGLIVAGIIGLKL). Topologically, residues 103-105 (SAH) are periplasmic.

The protein belongs to the drug/metabolite transporter (DMT) superfamily. Small multidrug resistance (SMR) (TC 2.A.7.1) family. Gdx/SugE subfamily.

The protein resides in the cell inner membrane. Guanidinium ion exporter. Couples guanidinium export to the proton motive force, exchanging one guanidinium ion for two protons. This is Guanidinium exporter from Salmonella typhi.